We begin with the raw amino-acid sequence, 227 residues long: Cytidylate kinase (227 aa).

7–15 contacts ATP; that stretch reads GPAGSGKST.

It belongs to the cytidylate kinase family. Type 1 subfamily.

It is found in the cytoplasm. The catalysed reaction is CMP + ATP = CDP + ADP. It carries out the reaction dCMP + ATP = dCDP + ADP. The chain is Cytidylate kinase from Salinibacter ruber (strain DSM 13855 / M31).